The primary structure comprises 361 residues: Phosphoserine aminotransferase (361 aa).

The L-glutamate site is built by Ser-9 and Arg-42. Residues 76-77, Trp-103, Thr-153, Asp-173, and Gln-196 contribute to the pyridoxal 5'-phosphate site; that span reads AR. Lys-197 is subject to N6-(pyridoxal phosphate)lysine. Residue 238–239 participates in pyridoxal 5'-phosphate binding; that stretch reads NT.

Belongs to the class-V pyridoxal-phosphate-dependent aminotransferase family. SerC subfamily. As to quaternary structure, homodimer. Pyridoxal 5'-phosphate is required as a cofactor.

It is found in the cytoplasm. The catalysed reaction is O-phospho-L-serine + 2-oxoglutarate = 3-phosphooxypyruvate + L-glutamate. It carries out the reaction 4-(phosphooxy)-L-threonine + 2-oxoglutarate = (R)-3-hydroxy-2-oxo-4-phosphooxybutanoate + L-glutamate. The protein operates within amino-acid biosynthesis; L-serine biosynthesis; L-serine from 3-phospho-D-glycerate: step 2/3. Its pathway is cofactor biosynthesis; pyridoxine 5'-phosphate biosynthesis; pyridoxine 5'-phosphate from D-erythrose 4-phosphate: step 3/5. Catalyzes the reversible conversion of 3-phosphohydroxypyruvate to phosphoserine and of 3-hydroxy-2-oxo-4-phosphonooxybutanoate to phosphohydroxythreonine. The polypeptide is Phosphoserine aminotransferase (Wigglesworthia glossinidia brevipalpis).